Reading from the N-terminus, the 311-residue chain is Porphobilinogen deaminase (311 aa).

Cysteine 245 carries the post-translational modification S-(dipyrrolylmethanemethyl)cysteine.

This sequence belongs to the HMBS family. As to quaternary structure, monomer. Dipyrromethane is required as a cofactor.

The enzyme catalyses 4 porphobilinogen + H2O = hydroxymethylbilane + 4 NH4(+). It functions in the pathway porphyrin-containing compound metabolism; protoporphyrin-IX biosynthesis; coproporphyrinogen-III from 5-aminolevulinate: step 2/4. Tetrapolymerization of the monopyrrole PBG into the hydroxymethylbilane pre-uroporphyrinogen in several discrete steps. The chain is Porphobilinogen deaminase from Deinococcus deserti (strain DSM 17065 / CIP 109153 / LMG 22923 / VCD115).